Here is a 63-residue protein sequence, read N- to C-terminus: Large ribosomal subunit protein bL32 (63 aa).

Positions 1–23 (MATPKAKVSKSRRDKRRAQFTAR) are disordered. The segment covering 7–18 (KVSKSRRDKRRA) has biased composition (basic residues).

Belongs to the bacterial ribosomal protein bL32 family.

In Chlorobium phaeobacteroides (strain BS1), this protein is Large ribosomal subunit protein bL32.